Consider the following 93-residue polypeptide: MSRSVKKGPFVDPKLLKKIIEMNKKNEKKVIKTWSRDSTIVPEMVGHTIAVHDGRKHVPVYITEAMVGHKLGEFAPTRTFRGHAGSEKTTKVK.

Belongs to the universal ribosomal protein uS19 family.

Its function is as follows. Protein S19 forms a complex with S13 that binds strongly to the 16S ribosomal RNA. This is Small ribosomal subunit protein uS19 from Caldanaerobacter subterraneus subsp. tengcongensis (strain DSM 15242 / JCM 11007 / NBRC 100824 / MB4) (Thermoanaerobacter tengcongensis).